Here is a 588-residue protein sequence, read N- to C-terminus: MEAADASRSNGSSPEARDARSPSGPSGSLENGTKADGKDAKTTNGHGGEAAEGKSLGSALKPGEGRSALFAGNEWRRPIIQFVESGDDKNSNYFSMDSMEGKRSPYAGLQLGAAKKPPVTFAEKGELRKSIFSESRKPTVSIMEPGETRRNSYPRADTGLFSRSKSGSEEVLCDSCIGNKQKAVKSCLVCQASFCELHLKPHLEGAAFRDHQLLEPIRDFEARKCPVHGKTMELFCQTDQTCICYLCMFQEHKNHSTVTVEEAKAEKETELSLQKEQLQLKIIEIEDEAEKWQKEKDRIKSFTTNEKAILEQNFRDLVRDLEKQKEEVRAALEQREQDAVDQVKVIMDALDERAKVLHEDKQTREQLHSISDSVLFLQEFGALMSNYSLPPPLPTYHVLLEGEGLGQSLGNFKDDLLNVCMRHVEKMCKADLSRNFIERNHMENGGDHRYVNNYTNSFGGEWSAPDTMKRYSMYLTPKGGVRTSYQPSSPGRFTKETTQKNFNNLYGTKGNYTSRVWEYSSSIQNSDNDLPVVQGSSSFSLKGYPSLMRSQSPKAQPQTWKSGKQTMLSHYRPFYVNKGNGIGSNEAP.

The tract at residues 1 to 66 is disordered; the sequence is MEAADASRSN…GSALKPGEGR (66 aa). Residues Ser21, Ser28, Ser58, and Ser104 each carry the phosphoserine modification. Tyr106 bears the Phosphotyrosine mark. The B box-type zinc finger occupies 220 to 260; that stretch reads FEARKCPVHGKTMELFCQTDQTCICYLCMFQEHKNHSTVTV. Residues Cys225, His228, Cys247, and His252 each coordinate Zn(2+). Positions 259-352 form a coiled coil; sequence TVEEAKAEKE…VKVIMDALDE (94 aa). Position 476 is a phosphothreonine (Thr476). Position 489 is a phosphoserine (Ser489).

In terms of assembly, interacts with VIM and HINT1. Interacts with IKBKG/NEMO. Interacts with STING1. In terms of processing, constitutively phosphorylated by PKC on serine/threonine in A431 cells. Expressed in placenta, prostate and thymus.

The protein resides in the cytoplasm. It localises to the lysosome. In terms of biological role, plays a crucial role in the regulation of macrophage activation in response to viral or bacterial infections within the respiratory tract. Mechanistically, TRIM29 interacts with IKBKG/NEMO in the lysosome where it induces its 'Lys-48' ubiquitination and subsequent degradation. In turn, the expression of type I interferons and the production of pro-inflammatory cytokines are inhibited. Additionally, induces the 'Lys-48' ubiquitination of STING1 in a similar way, leading to its degradation. The sequence is that of Tripartite motif-containing protein 29 (TRIM29) from Homo sapiens (Human).